The chain runs to 178 residues: Extracellular fatty acid-binding protein (178 aa).

A signal peptide spans 1 to 20; that stretch reads MRTLALSLGLALLCLLHAKA. T43 provides a ligand contact to enterobactin. 1-tetradecanoyl-sn-glycerol 3-phosphate-binding residues include Y72 and K104. A disulfide bridge links C80 with C173. Enterobactin is bound by residues K104, R123, and R134. 134-136 is a binding site for 1-tetradecanoyl-sn-glycerol 3-phosphate; sequence RLY.

It belongs to the calycin superfamily. Lipocalin family. In terms of assembly, monomer.

The protein resides in the secreted. In terms of biological role, siderocalin-like lipocalin tightly binding a variety of bacterial ferric siderophores, also binds long-chain unsaturated fatty acids such as linoleic acid, oleic acid, arachidonic acid and, with a lower affinity, long chain saturated fatty acids such as steraic acid. May act as an antibacterial factor, through dual ligand specificity, both as a siderophore-sequestrating molecule and a lysophosphatidic acid (LPA) sensor. The polypeptide is Extracellular fatty acid-binding protein (Coturnix japonica (Japanese quail)).